Reading from the N-terminus, the 115-residue chain is Transcription and mRNA export factor ENY2 (115 aa).

The protein belongs to the ENY2 family. As to quaternary structure, component of a deubiquitination module (DUB module) formed by ENY2, SGF11, and UBP22 in Arabidopsis. Interacts directly with SGF11, but not with UBP22. Interacts with MOS4. In terms of tissue distribution, expressed in roots, cotyledons, leaves and upper part of sepals.

The protein resides in the nucleus. It localises to the nucleoplasm. Functionally, component of a deubiquitination module (DUB module) that specifically deubiquinates monoubiquinated histone H2B (H2Bub). Does not seem to be a component of the TREX-2 complex. Seems to act independently of the SAGA multiprotein complex. The DUB module is responsible for the major H2Bub deubiquitinase activity in Arabidopsis. In Arabidopsis thaliana (Mouse-ear cress), this protein is Transcription and mRNA export factor ENY2.